Reading from the N-terminus, the 430-residue chain is Phosphoserine aminotransferase 1, chloroplastic (430 aa).

A chloroplast-targeting transit peptide spans 1-51; that stretch reads MAATTNSFLVGSNNTQIPALKPKSSSQSFLHLSKPNTVNFVSKTKPVAVRC. V52 carries the N-acetylvaline modification. Residue R111 coordinates L-glutamate. Residues 145–146, W171, T221, D241, and Q264 each bind pyridoxal 5'-phosphate; that span reads AT. K265 carries the post-translational modification N6-(pyridoxal phosphate)lysine. Residue 306-307 participates in pyridoxal 5'-phosphate binding; that stretch reads NT.

This sequence belongs to the class-V pyridoxal-phosphate-dependent aminotransferase family. SerC subfamily. In terms of assembly, homodimer. The cofactor is pyridoxal 5'-phosphate. Ubiquitous, but expressed preferentially in light-grown roots and shoots. Detected in root meristems and in root tissues surrounding the vascular bundle.

Its subcellular location is the plastid. The protein resides in the chloroplast. The catalysed reaction is O-phospho-L-serine + 2-oxoglutarate = 3-phosphooxypyruvate + L-glutamate. It catalyses the reaction 4-(phosphooxy)-L-threonine + 2-oxoglutarate = (R)-3-hydroxy-2-oxo-4-phosphooxybutanoate + L-glutamate. Its pathway is amino-acid biosynthesis; L-serine biosynthesis; L-serine from 3-phospho-D-glycerate: step 2/3. The protein operates within cofactor biosynthesis; pyridoxine 5'-phosphate biosynthesis; pyridoxine 5'-phosphate from D-erythrose 4-phosphate: step 3/5. Inhibited by high concentration of cysteine and by 3-phosphonooxypyruvate. Not inhibited by serine, threonine, valine, glycine, tryptophan and O-acetyl-L-serine. In terms of biological role, involved in the plastidial phosphorylated pathway of serine biosynthesis (PPSB). Catalyzes the reversible conversion of 3-phosphohydroxypyruvate to phosphoserine. This is Phosphoserine aminotransferase 1, chloroplastic from Arabidopsis thaliana (Mouse-ear cress).